We begin with the raw amino-acid sequence, 176 residues long: Interleukin-1 receptor antagonist protein (176 aa).

The first 25 residues, 1 to 25 (METCRCPLSYLISFLLFLSHSETAC), serve as a signal peptide directing secretion. Cys91 and Cys141 are disulfide-bonded. The N-linked (GlcNAc...) asparagine glycan is linked to Asn109.

The protein belongs to the IL-1 family.

It localises to the secreted. Its function is as follows. Anti-inflammatory antagonist of interleukin-1 family of proinflammatory cytokines such as interleukin-1beta/IL1B and interleukin-1alpha/IL1A. Protects from immune dysregulation and uncontrolled systemic inflammation triggered by IL1 for a range of innate stimulatory agents such as pathogens. This chain is Interleukin-1 receptor antagonist protein (IL1RN), found in Canis lupus familiaris (Dog).